The chain runs to 449 residues: Nucleoporin NUP42 (449 aa).

The C3H1-type zinc finger occupies 1–25 (MAICSFFLQGRCRYGEKCWNEHPRG). 2 disordered regions span residues 22-84 (HPRG…GFDN) and 218-237 (DMTS…SSFP). Polar residues-rich tracts occupy residues 47 to 83 (WGSS…SGFD) and 218 to 227 (DMTSGYNGQQ). FG repeat units lie at residues 231–232 (FG), 274–275 (FG), 284–285 (FG), 305–306 (FG), 314–315 (FG), 335–336 (FG), and 347–348 (FG).

Probable component of the nuclear pore complex (NPC).

Its subcellular location is the nucleus. It is found in the nuclear pore complex. The protein localises to the nucleus membrane. In terms of biological role, required for the export of mRNAs containing poly(A) tails from the nucleus into the cytoplasm. This Xenopus tropicalis (Western clawed frog) protein is Nucleoporin NUP42 (nup42).